Reading from the N-terminus, the 123-residue chain is Small ribosomal subunit protein uS12 (123 aa).

Residues 1–29 form a disordered region; sequence MPTINQLVRKGRVPQKAKSKVPAMEQNPQ. Basic residues predominate over residues 9–19; it reads RKGRVPQKAKS. Aspartate 89 is subject to 3-methylthioaspartic acid.

This sequence belongs to the universal ribosomal protein uS12 family. Part of the 30S ribosomal subunit. Contacts proteins S8 and S17. May interact with IF1 in the 30S initiation complex.

With S4 and S5 plays an important role in translational accuracy. Functionally, interacts with and stabilizes bases of the 16S rRNA that are involved in tRNA selection in the A site and with the mRNA backbone. Located at the interface of the 30S and 50S subunits, it traverses the body of the 30S subunit contacting proteins on the other side and probably holding the rRNA structure together. The combined cluster of proteins S8, S12 and S17 appears to hold together the shoulder and platform of the 30S subunit. This Erythrobacter litoralis (strain HTCC2594) protein is Small ribosomal subunit protein uS12.